The sequence spans 250 residues: tRNA (guanine-N(1)-)-methyltransferase (250 aa).

Residues Gly-113 and 133-138 (IGDYVL) each bind S-adenosyl-L-methionine.

Belongs to the RNA methyltransferase TrmD family. In terms of assembly, homodimer.

It localises to the cytoplasm. The enzyme catalyses guanosine(37) in tRNA + S-adenosyl-L-methionine = N(1)-methylguanosine(37) in tRNA + S-adenosyl-L-homocysteine + H(+). Its function is as follows. Specifically methylates guanosine-37 in various tRNAs. In Shewanella amazonensis (strain ATCC BAA-1098 / SB2B), this protein is tRNA (guanine-N(1)-)-methyltransferase.